The following is a 1514-amino-acid chain: Polycomb group protein ASXL1 (1514 aa).

The HTH HARE-type domain maps to 11–86 (RTWAEAARLV…RISLFTLKKD (76 aa)). Disordered regions lie at residues 95 to 170 (ATVD…VMLP) and 183 to 249 (HVEP…RGEE). The segment covering 98 to 107 (DGDEPEDSAD) has biased composition (acidic residues). Positions 111–145 (CGSNEASTVSGENDVSLDETSSNASCSTESQSRPL) are enriched in polar residues. A compositionally biased stretch (low complexity) spans 199–209 (SGSPSSSSSGS). Residues 243–246 (KRNR) are interaction with nucleosomal DNA forming a DNA clamp with BAP1. The DEUBAD domain maps to 255 to 364 (PGSILVNTNL…FEDYYGQKLG (110 aa)). An LXXLL motif 1 motif is present at residues 284–288 (LLLLL). The interaction with NCOA1 stretch occupies residues 300-655 (LLRLSGSALN…GGGSGAIDEG (356 aa)). An NEF motif motif is present at residues 310–315 (NEFFTH). An interaction with nucleosomal DNA region spans residues 336 to 346 (RLRQEMEKEKK). Disordered regions lie at residues 378-543 (EEAK…EDRQ), 635-823 (TTAI…FDNM), 895-914 (SDPE…EKEW), 926-952 (SVPQ…SDSE), and 964-995 (ISEA…VDAS). Positions 408-415 (FKKRSRPD) match the Nuclear localization signal motif. Residues 458–473 (VNSTPGPDVSSATSGQ) show a composition bias toward polar residues. 2 positions are modified to phosphoserine: S498 and S500. Basic and acidic residues-rich tracts occupy residues 514–525 (QETKDQKRKSFE) and 533–543 (PEKKPRLEDRQ). Residues 638–654 (IGGGGGPGGGGSGAIDE) show a composition bias toward gly residues. Positions 678 to 692 (PSTSGESASDLQRTQ) are enriched in polar residues. Composition is skewed to basic and acidic residues over residues 713 to 728 (ARRE…ESCL) and 779 to 793 (LLDD…REDQ). The LXXLL motif 2 signature appears at 808 to 812 (LGDLL). Over residues 971–980 (HSESTDTASD) the composition is skewed to polar residues. Positions 1082–1087 (LVMHLL) are required for interaction with RARA. 3 disordered regions span residues 1095 to 1131 (KVLP…ENNR), 1213 to 1234 (EQKE…GQCL), and 1256 to 1338 (SEQT…VSAD). Over residues 1119-1129 (DRGTLQGTGEN) the composition is skewed to polar residues. Composition is skewed to polar residues over residues 1256 to 1269 (SEQT…QNNA) and 1313 to 1324 (SKNSVSGGVQTT). The PHD-type; atypical zinc finger occupies 1476–1513 (SLQCACSLKAMIMCQGCGAFCHDDCIGPSKLCVLCLVV).

The protein belongs to the Asx family. In terms of assembly, core component of the polycomb repressive deubiquitinase (PR-DUB) complex, at least composed of BAP1, one of ASXL1, ASXL2 or (probably) ASXL3, and one of MBD5 or MBD6. Distinct combinations of ASXL and MBD proteins may preferentially bind specific histone modification marks. The PR-DUB core associates with a number of accessory proteins, including FOXK1, FOXK2, KDM1B, HCFC1 and OGT; KDM1B specifically associates with ASXL2 PR-DUB complexes. Interacts (via DEUBAD domain) with BAP1 (via ULD domain); the interaction is direct and forms a ubiquitin binding cleft. The interaction with BAP1 is important for maintaining BAP1 stability. Together with BAP1, associates (via DEUBAD domain) with nucleosomes; interacts with nucleosomal DNA and stabilizes the orientation of the nucleosome to line up the PR-DUB complex active site with its H2AK118ub1 substrate. Interacts (via PHD domain) with MBD5 and MBD6 (via MBD domain); the interaction is probably direct and mediates association of MBD proteins with the PR-DUB core. Interacts with RARA, RXRA. Interacts with NCOA1. Interacts with PPARA and PPARG. Ubiquitinated by TRIP12, leading to its subsequent degradation following binding of N(6)-methyladenine methylated DNA (6mA).

The protein resides in the nucleus. In terms of biological role, probable Polycomb group (PcG) protein involved in transcriptional regulation mediated by ligand-bound nuclear hormone receptors, such as retinoic acid receptors (RARs) and peroxisome proliferator-activated receptor gamma (PPARG). Acts as a coactivator of RARA and RXRA through association with NCOA1. Acts as a corepressor for PPARG and suppresses its adipocyte differentiation-inducing activity. Non-catalytic component of the PR-DUB complex, a complex that specifically mediates deubiquitination of histone H2A monoubiquitinated at 'Lys-119' (H2AK119ub1). Acts as a sensor of N(6)-methyladenine methylation on DNA (6mA): recognizes and binds 6mA DNA, leading to its ubiquitination and degradation by TRIP12, thereby inactivating the PR-DUB complex and regulating Polycomb silencing. The PR-DUB complex is an epigenetic regulator of gene expression and acts as a transcriptional coactivator, affecting genes involved in development, cell communication, signaling, cell proliferation and cell viability. ASXL1, ASXL2 and ASXL3 function redundantly in the PR-DUB complex. The ASXL proteins are essential for chromatin recruitment and transcriptional activation of associated genes. ASXL1 and ASXL2 are important for BAP1 protein stability. Together with BAP1, negatively regulates epithelial-mesenchymal transition (EMT) of trophoblast stem cells during placental development by regulating genes involved in epithelial cell integrity, cell adhesion and cytoskeletal organization. This is Polycomb group protein ASXL1 (Asxl1) from Mus musculus (Mouse).